We begin with the raw amino-acid sequence, 133 residues long: Phosphoribosyl-AMP cyclohydrolase (133 aa).

Asp-90 contacts Mg(2+). Cys-91 contacts Zn(2+). The Mg(2+) site is built by Asp-92 and Asp-94. The Zn(2+) site is built by Cys-107 and Cys-114.

This sequence belongs to the PRA-CH family. As to quaternary structure, homodimer. The cofactor is Mg(2+). Requires Zn(2+) as cofactor.

It localises to the cytoplasm. It catalyses the reaction 1-(5-phospho-beta-D-ribosyl)-5'-AMP + H2O = 1-(5-phospho-beta-D-ribosyl)-5-[(5-phospho-beta-D-ribosylamino)methylideneamino]imidazole-4-carboxamide. Its pathway is amino-acid biosynthesis; L-histidine biosynthesis; L-histidine from 5-phospho-alpha-D-ribose 1-diphosphate: step 3/9. Functionally, catalyzes the hydrolysis of the adenine ring of phosphoribosyl-AMP. This is Phosphoribosyl-AMP cyclohydrolase from Streptomyces avermitilis (strain ATCC 31267 / DSM 46492 / JCM 5070 / NBRC 14893 / NCIMB 12804 / NRRL 8165 / MA-4680).